The chain runs to 239 residues: Enolase-phosphatase E1 (239 aa).

Mg(2+) contacts are provided by Asp13 and Glu15. Residues 133-134 and Lys170 contribute to the substrate site; that span reads SS. A Mg(2+)-binding site is contributed by Asp196.

Belongs to the HAD-like hydrolase superfamily. MasA/MtnC family. As to quaternary structure, monomer. Requires Mg(2+) as cofactor.

It localises to the cytoplasm. Its subcellular location is the nucleus. It catalyses the reaction 5-methylsulfanyl-2,3-dioxopentyl phosphate + H2O = 1,2-dihydroxy-5-(methylsulfanyl)pent-1-en-3-one + phosphate. The protein operates within amino-acid biosynthesis; L-methionine biosynthesis via salvage pathway; L-methionine from S-methyl-5-thio-alpha-D-ribose 1-phosphate: step 3/6. It participates in amino-acid biosynthesis; L-methionine biosynthesis via salvage pathway; L-methionine from S-methyl-5-thio-alpha-D-ribose 1-phosphate: step 4/6. Its function is as follows. Bifunctional enzyme that catalyzes the enolization of 2,3-diketo-5-methylthiopentyl-1-phosphate (DK-MTP-1-P) into the intermediate 2-hydroxy-3-keto-5-methylthiopentenyl-1-phosphate (HK-MTPenyl-1-P), which is then dephosphorylated to form the acireductone 1,2-dihydroxy-3-keto-5-methylthiopentene (DHK-MTPene). The sequence is that of Enolase-phosphatase E1 from Chaetomium globosum (strain ATCC 6205 / CBS 148.51 / DSM 1962 / NBRC 6347 / NRRL 1970) (Soil fungus).